Reading from the N-terminus, the 154-residue chain is Universal stress protein Sll1388 (154 aa).

It belongs to the universal stress protein A family.

In Synechocystis sp. (strain ATCC 27184 / PCC 6803 / Kazusa), this protein is Universal stress protein Sll1388.